The sequence spans 178 residues: Natriuretic and helokinestatin peptides (178 aa).

A signal peptide spans 1–25 (MNPRLACSTWLPLLLVLFTLDQGRA). 5 propeptides span residues 26-58 (NPVERGQEYRSLSKRFDDDSTELILEPRASEEN), 69-73 (ASDEN), 85-89 (ASDEN), 103-112 (ASEQKGPPFN), and 123-146 (AANENALRKLIKRSFERSPGRNKR). Disordered stretches follow at residues 69–107 (ASDENVPPAYVPLVPRASDENVPPPPLQMPLIPRASEQK) and 135–155 (RSFERSPGRNKRLSPGDGCFG). Cys153 and Cys169 form a disulfide bridge.

It in the C-terminal section; belongs to the natriuretic peptide family. As to expression, expressed by the venom gland.

The protein resides in the secreted. Helokinestatins antagonize the vasodilatory actions of bradykinin at the B2 bradykinin receptor (BDKRB2), with helokinestatin-1 being the most potent antagonist. In terms of biological role, exhibits hypotensive and vasodepressor activities, possibly by targeting natriuretic peptide receptors NPR1 and NPR2. This is Natriuretic and helokinestatin peptides from Heloderma suspectum cinctum (Banded Gila monster).